Consider the following 523-residue polypeptide: MLNVFGVSASMPDDSRSQKMGLLGAISYIVGNIVGSGIFITPTSIIENVNSVGLSLAIWILAAFISMLGSFCYVELGTSIRLSGGDFAYLCFMKWYPVAFAFMCIGCTINYPATLAVQAQTFAEYVFRGAGVELDETSEFWAKKLLGFSLIILLMFMNFFSLKTFVQRFSILASLAKIAATLLIIITGFYYLIFKHWKQNLEEPFKGSNWNPGPFVNALFAGLFSYDGWDILNFGAEEIENPKRTMPLSIIIGMTCIGVIYVAVNVAYSIVLSPTEMIASNAVAIDFANKTLGAAAFVVPVMVAILLIGSLNSTMFSASRYLQAVSRQGHIPSAISGIAPNCDSPRVALLVHILIAIAVSFLGDPDKLINYVAFAQWSQRAFTMSALLYLRIRGRPRHPDRIQLPIIMPILFFLVCTSMVVISIIDDFKSSAVGLGILLGGLIIFIIFVWDRALPSSHTFRNATHVINEESTKFMQIIFNVVPERVGDEEMKNAIGGAESESEKVPAYKISPTGNGQFKCTRM.

Over 1–19 (MLNVFGVSASMPDDSRSQK) the chain is Cytoplasmic. The helical transmembrane segment at 20–40 (MGLLGAISYIVGNIVGSGIFI) threads the bilayer. Topologically, residues 41-51 (TPTSIIENVNS) are extracellular. Residues 52–72 (VGLSLAIWILAAFISMLGSFC) form a helical membrane-spanning segment. The Cytoplasmic segment spans residues 73 to 86 (YVELGTSIRLSGGD). A helical transmembrane segment spans residues 87-107 (FAYLCFMKWYPVAFAFMCIGC). At 108 to 145 (TINYPATLAVQAQTFAEYVFRGAGVELDETSEFWAKKL) the chain is on the extracellular side. Residues 146 to 166 (LGFSLIILLMFMNFFSLKTFV) traverse the membrane as a helical segment. The Cytoplasmic portion of the chain corresponds to 167-173 (QRFSILA). Residues 174-194 (SLAKIAATLLIIITGFYYLIF) form a helical membrane-spanning segment. Residues 195–214 (KHWKQNLEEPFKGSNWNPGP) lie on the Extracellular side of the membrane. The helical transmembrane segment at 215–235 (FVNALFAGLFSYDGWDILNFG) threads the bilayer. Residues 236-249 (AEEIENPKRTMPLS) lie on the Cytoplasmic side of the membrane. Residues 250–270 (IIIGMTCIGVIYVAVNVAYSI) form a helical membrane-spanning segment. The Extracellular segment spans residues 271-290 (VLSPTEMIASNAVAIDFANK). The N-linked (GlcNAc...) asparagine glycan is linked to Asn289. A helical membrane pass occupies residues 291–311 (TLGAAAFVVPVMVAILLIGSL). Residues 312 to 348 (NSTMFSASRYLQAVSRQGHIPSAISGIAPNCDSPRVA) lie on the Cytoplasmic side of the membrane. Residues 349–369 (LLVHILIAIAVSFLGDPDKLI) form a helical membrane-spanning segment. The Extracellular segment spans residues 370–404 (NYVAFAQWSQRAFTMSALLYLRIRGRPRHPDRIQL). Residues 405–425 (PIIMPILFFLVCTSMVVISII) traverse the membrane as a helical segment. The Cytoplasmic segment spans residues 426–429 (DDFK). A helical transmembrane segment spans residues 430–450 (SSAVGLGILLGGLIIFIIFVW). At 451–523 (DRALPSSHTF…GNGQFKCTRM (73 aa)) the chain is on the extracellular side. The N-linked (GlcNAc...) asparagine glycan is linked to Asn462. The short motif at 521 to 523 (TRM) is the PDZ-binding motif element.

Belongs to the amino acid-polyamine-organocation (APC) superfamily. As to quaternary structure, interacts (via PDZ-binding motif) with nfrl-1 (via PDZ 2 domain); the interaction with nrfl-1 is required to sequester aat-6 to the apical cell membrane of intestinal cells. Expressed at the apical cell membrane of intestinal cells.

The protein resides in the apical cell membrane. Amino acid transporter that mediates the uptake of the L-enantiomers of various amino acids, including L-glutamate. May play a role in promoting fertility. The protein is Amino acid transporter protein 6 of Caenorhabditis elegans.